The primary structure comprises 528 residues: Chaperonin GroEL, chloroplastic (528 aa).

Residues 29–32, 86–90, glycine 414, and aspartate 496 each bind ATP; these read TLGP and DGTTT.

It belongs to the chaperonin (HSP60) family. Forms a cylinder of 14 subunits composed of two heptameric rings stacked back-to-back. Interacts with the co-chaperonin GroES.

Its subcellular location is the plastid. It localises to the chloroplast. It carries out the reaction ATP + H2O + a folded polypeptide = ADP + phosphate + an unfolded polypeptide.. In terms of biological role, together with its co-chaperonin GroES, plays an essential role in assisting protein folding. The GroEL-GroES system forms a nano-cage that allows encapsulation of the non-native substrate proteins and provides a physical environment optimized to promote and accelerate protein folding. This chain is Chaperonin GroEL, chloroplastic, found in Gracilaria tenuistipitata var. liui (Red alga).